We begin with the raw amino-acid sequence, 173 residues long: S-ribosylhomocysteine lyase (173 aa).

The Fe cation site is built by His-54, His-58, and Cys-128.

This sequence belongs to the LuxS family. Homodimer. The cofactor is Fe cation.

It carries out the reaction S-(5-deoxy-D-ribos-5-yl)-L-homocysteine = (S)-4,5-dihydroxypentane-2,3-dione + L-homocysteine. Involved in the synthesis of autoinducer 2 (AI-2) which is secreted by bacteria and is used to communicate both the cell density and the metabolic potential of the environment. The regulation of gene expression in response to changes in cell density is called quorum sensing. Catalyzes the transformation of S-ribosylhomocysteine (RHC) to homocysteine (HC) and 4,5-dihydroxy-2,3-pentadione (DPD). The protein is S-ribosylhomocysteine lyase of Hydrogenovibrio crunogenus (strain DSM 25203 / XCL-2) (Thiomicrospira crunogena).